The chain runs to 172 residues: S-ribosylhomocysteine lyase (172 aa).

Fe cation is bound by residues H54, H58, and C128.

Belongs to the LuxS family. In terms of assembly, homodimer. Fe cation is required as a cofactor.

It carries out the reaction S-(5-deoxy-D-ribos-5-yl)-L-homocysteine = (S)-4,5-dihydroxypentane-2,3-dione + L-homocysteine. Functionally, involved in the synthesis of autoinducer 2 (AI-2) which is secreted by bacteria and is used to communicate both the cell density and the metabolic potential of the environment. The regulation of gene expression in response to changes in cell density is called quorum sensing. Catalyzes the transformation of S-ribosylhomocysteine (RHC) to homocysteine (HC) and 4,5-dihydroxy-2,3-pentadione (DPD). The polypeptide is S-ribosylhomocysteine lyase (Vibrio vulnificus (strain CMCP6)).